The primary structure comprises 714 residues: Transcription activator of gluconeogenesis UREG_00958 (714 aa).

The interval 1-71 (MTSNARNGPL…NAKDPLRPRR (71 aa)) is disordered. Positions 38-62 (ESQTQVENSSTKQPNGQTKPMSASN) are enriched in polar residues. The segment at residues 78–106 (CFACQRAHLTCGDERPCQRCIKRGIQNSC) is a DNA-binding region (zn(2)-C6 fungal-type). Disordered regions lie at residues 176 to 228 (SLSQ…NASG), 274 to 312 (GAGD…TAQP), and 539 to 567 (NTGG…VNPS). A compositionally biased stretch (polar residues) spans 191-228 (FPSQSPVSPTFSITANSATSGNQNMPSSLPASNGNASG). The span at 545 to 555 (GSTSGTSSRGS) shows a compositional bias: low complexity.

It belongs to the ERT1/acuK family.

It is found in the nucleus. Transcription factor which regulates nonfermentable carbon utilization. Activator of gluconeogenetic genes. The chain is Transcription activator of gluconeogenesis UREG_00958 from Uncinocarpus reesii (strain UAMH 1704).